The chain runs to 862 residues: Glucans biosynthesis glucosyltransferase H (862 aa).

The interval 1–25 (MELPATSGLNAQPGNAEGTTASTRP) is disordered. A compositionally biased stretch (polar residues) spans 7–25 (SGLNAQPGNAEGTTASTRP). 5 helical membrane-spanning segments follow: residues 188-210 (RLTL…SSVL), 545-567 (GVMA…ALLA), 597-619 (ALFS…VLWA), 626-648 (GGAV…AAPV), and 708-730 (FLWW…VFSS).

The protein belongs to the glycosyltransferase 2 family. OpgH subfamily.

The protein localises to the cell inner membrane. Its pathway is glycan metabolism; osmoregulated periplasmic glucan (OPG) biosynthesis. Involved in the biosynthesis of osmoregulated periplasmic glucans (OPGs). This chain is Glucans biosynthesis glucosyltransferase H, found in Ralstonia nicotianae (strain ATCC BAA-1114 / GMI1000) (Ralstonia solanacearum).